Reading from the N-terminus, the 206-residue chain is Large ribosomal subunit protein bL25 (206 aa).

It belongs to the bacterial ribosomal protein bL25 family. CTC subfamily. In terms of assembly, part of the 50S ribosomal subunit; part of the 5S rRNA/L5/L18/L25 subcomplex. Contacts the 5S rRNA. Binds to the 5S rRNA independently of L5 and L18.

This is one of the proteins that binds to the 5S RNA in the ribosome where it forms part of the central protuberance. The chain is Large ribosomal subunit protein bL25 from Paraburkholderia phytofirmans (strain DSM 17436 / LMG 22146 / PsJN) (Burkholderia phytofirmans).